Reading from the N-terminus, the 278-residue chain is Large ribosomal subunit protein uL2 (278 aa).

Composition is skewed to basic residues over residues 210-219 and 252-263; these read RSRWLGKRPQ and KKSRGIKTRNSK. The disordered stretch occupies residues 210–278; sequence RSRWLGKRPQ…LIIRHRKGNK (69 aa).

The protein belongs to the universal ribosomal protein uL2 family. In terms of assembly, part of the 50S ribosomal subunit. Forms a bridge to the 30S subunit in the 70S ribosome.

Functionally, one of the primary rRNA binding proteins. Required for association of the 30S and 50S subunits to form the 70S ribosome, for tRNA binding and peptide bond formation. It has been suggested to have peptidyltransferase activity; this is somewhat controversial. Makes several contacts with the 16S rRNA in the 70S ribosome. The sequence is that of Large ribosomal subunit protein uL2 from Lactobacillus johnsonii (strain CNCM I-12250 / La1 / NCC 533).